The primary structure comprises 137 residues: UPF0146 protein MJ0688 (137 aa).

The protein belongs to the UPF0146 family.

The sequence is that of UPF0146 protein MJ0688 from Methanocaldococcus jannaschii (strain ATCC 43067 / DSM 2661 / JAL-1 / JCM 10045 / NBRC 100440) (Methanococcus jannaschii).